The primary structure comprises 289 residues: Acetyl-coenzyme A carboxylase carboxyl transferase subunit beta (289 aa).

Residues Met36–Glu289 form the CoA carboxyltransferase N-terminal domain. Zn(2+)-binding residues include Cys40, Cys43, Cys58, and Cys61. Residues Cys40–Cys61 form a C4-type zinc finger.

This sequence belongs to the AccD/PCCB family. Acetyl-CoA carboxylase is a heterohexamer composed of biotin carboxyl carrier protein (AccB), biotin carboxylase (AccC) and two subunits each of ACCase subunit alpha (AccA) and ACCase subunit beta (AccD). The cofactor is Zn(2+).

It localises to the cytoplasm. It catalyses the reaction N(6)-carboxybiotinyl-L-lysyl-[protein] + acetyl-CoA = N(6)-biotinyl-L-lysyl-[protein] + malonyl-CoA. It participates in lipid metabolism; malonyl-CoA biosynthesis; malonyl-CoA from acetyl-CoA: step 1/1. Functionally, component of the acetyl coenzyme A carboxylase (ACC) complex. Biotin carboxylase (BC) catalyzes the carboxylation of biotin on its carrier protein (BCCP) and then the CO(2) group is transferred by the transcarboxylase to acetyl-CoA to form malonyl-CoA. This is Acetyl-coenzyme A carboxylase carboxyl transferase subunit beta from Limosilactobacillus reuteri subsp. reuteri (strain JCM 1112) (Lactobacillus reuteri).